A 102-amino-acid chain; its full sequence is Small ribosomal subunit protein uS10 (102 aa).

Belongs to the universal ribosomal protein uS10 family. In terms of assembly, part of the 30S ribosomal subunit.

In terms of biological role, involved in the binding of tRNA to the ribosomes. This chain is Small ribosomal subunit protein uS10, found in Enterococcus faecalis (strain ATCC 700802 / V583).